The chain runs to 243 residues: Complement C1q tumor necrosis factor-related protein 5 (243 aa).

An N-terminal signal peptide occupies residues 1-15 (MRPLLALLLLGLASG). Positions 15–124 (GSPPLDDNKI…VPPPADTPLP (110 aa)) are disordered. Residues 30–95 (GQPGLPGTPG…AGPVGAIGPA (66 aa)) enclose the Collagen-like domain. Positions 99–238 (SVPPRSAFSA…GFLVYSDWHS (140 aa)) constitute a C1q domain.

Homotrimer (via collagen-like domain). May form higher order oligomers by supercoiling of the trimers. May interact with ERFE.

It localises to the secreted. This Rattus norvegicus (Rat) protein is Complement C1q tumor necrosis factor-related protein 5 (C1qtnf5).